We begin with the raw amino-acid sequence, 494 residues long: MSSQPGDPATLPAQSSLSFTQGFLLGQLSVVLVLAAFIKFFIFGEAPPPPSRGLSHRSATHRRSNSIYSNSPQEAGSRSLREKPSTSNVLRPVPSSSTNTRSILRKTYYSAIPTNPAKHGRLRIHHSSHQPESLDWFNVLIAQTIAQYRQTAYSLKDSPTSSILNSLTAALNNPEKKPAFIDKITVTDISLGEEFPIFSNCRIIAVDDPNSDGGRLQALMDVDLSDDNLSIAIETQLLLNYPKPCSAILPVALSISVVRFSGTLCISLVPASTPPLDTPSHSPSPPTADTATSGRSKPGDKAGGNQPRSNGSTEDPAGGNPPKTSPKSNVAFSFLPDYRLDLSVRSLIGSRSRLQDVPKVAQLVEARVQAWFEERVVEPRVQVVGLPDLWPRMGRTGVRTGDDAETASNGPRSTVSADIGGSARHEELAREPEALRFRGLLGARPPFDVASRTSSFNVETGDLRSRSMTRQESSGDLSDQLHIPGSLPEAVTPG.

The Lumenal segment spans residues 1-22; sequence MSSQPGDPATLPAQSSLSFTQG. The chain crosses the membrane as a helical span at residues 23–43; the sequence is FLLGQLSVVLVLAAFIKFFIF. The Cytoplasmic portion of the chain corresponds to 44–494; that stretch reads GEAPPPPSRG…GSLPEAVTPG (451 aa). 4 disordered regions span residues 50–98, 274–330, 398–426, and 449–494; these read PSRG…SSST, PPLD…KSNV, VRTG…ARHE, and VASR…VTPG. A compositionally biased stretch (basic residues) spans 54-64; that stretch reads LSHRSATHRRS. Polar residues-rich tracts occupy residues 65–76 and 85–98; these read NSIYSNSPQEAG and STSN…SSST. The region spanning 130–387 is the SMP-LTD domain; sequence QPESLDWFNV…EPRVQVVGLP (258 aa). The span at 274–286 shows a compositional bias: pro residues; it reads PPLDTPSHSPSPP. 2 stretches are compositionally biased toward polar residues: residues 406-416 and 466-477; these read TASNGPRSTVS and RSMTRQESSGDL.

It belongs to the MMM1 family. As to quaternary structure, homodimer. Component of the ER-mitochondria encounter structure (ERMES) or MDM complex, composed of mmm1, mdm10, mdm12 and mdm34. A mmm1 homodimer associates with one molecule of mdm12 on each side in a pairwise head-to-tail manner, and the SMP-LTD domains of mmm1 and mdm12 generate a continuous hydrophobic tunnel for phospholipid trafficking.

The protein resides in the endoplasmic reticulum membrane. Component of the ERMES/MDM complex, which serves as a molecular tether to connect the endoplasmic reticulum (ER) and mitochondria. Components of this complex are involved in the control of mitochondrial shape and protein biogenesis, and function in nonvesicular lipid trafficking between the ER and mitochondria. The mdm12-mmm1 subcomplex functions in the major beta-barrel assembly pathway that is responsible for biogenesis of all outer membrane beta-barrel proteins, and acts in a late step after the SAM complex. The mdm10-mdm12-mmm1 subcomplex further acts in the TOM40-specific pathway after the action of the mdm12-mmm1 complex. Essential for establishing and maintaining the structure of mitochondria and maintenance of mtDNA nucleoids. This is Maintenance of mitochondrial morphology protein 1 from Aspergillus clavatus (strain ATCC 1007 / CBS 513.65 / DSM 816 / NCTC 3887 / NRRL 1 / QM 1276 / 107).